Here is a 332-residue protein sequence, read N- to C-terminus: Beta-ketoacyl-[acyl-carrier-protein] synthase III (332 aa).

Residues C116 and H257 contribute to the active site. The ACP-binding stretch occupies residues Q258–R262. N287 is a catalytic residue.

The protein belongs to the thiolase-like superfamily. FabH family. In terms of assembly, homodimer.

It localises to the cytoplasm. It carries out the reaction malonyl-[ACP] + acetyl-CoA + H(+) = 3-oxobutanoyl-[ACP] + CO2 + CoA. The protein operates within lipid metabolism; fatty acid biosynthesis. Functionally, catalyzes the condensation reaction of fatty acid synthesis by the addition to an acyl acceptor of two carbons from malonyl-ACP. Catalyzes the first condensation reaction which initiates fatty acid synthesis and may therefore play a role in governing the total rate of fatty acid production. Possesses both acetoacetyl-ACP synthase and acetyl transacylase activities. Its substrate specificity determines the biosynthesis of branched-chain and/or straight-chain of fatty acids. In Acaryochloris marina (strain MBIC 11017), this protein is Beta-ketoacyl-[acyl-carrier-protein] synthase III.